Here is a 406-residue protein sequence, read N- to C-terminus: MGSPDSSSGSAQKPPRHQHQHQPPPPRRQGSAPELPPGFRFHPTDEELVVHYLKKKAAKAPLPVTIIAEVDLYKFDPWELPEKATFGEHEWYFFSPRDRKYPNGARPNRAATSGYWKATGTDKPILASATGCGREKVGVKKALVFYRGKPPRGLKTNWIMHEYRLTGASAGSTTTSRPPPVTGGSRAPASLRLDDWVLCRIYKKTSKAAAAVGDEQRSMECEDSVEDAVTAYPPYATAGMAGAGAHGSNYVQLLHHHDSHEDNFQLDGLLTEHDVGLSAGAASLGHLAAAARATKQFLAPSSSTPFNWLEASTGGSILPQARNFPGFNRSRNVGSMSLSSTADDMAGAVDVSDGGNAVNAMYLPVQDGTYHQHVILGAPLAPEAIAGAATSGFQHHVQISGVNWNP.

Over residues 1–11 (MGSPDSSSGSA) the composition is skewed to polar residues. The segment at 1–40 (MGSPDSSSGSAQKPPRHQHQHQPPPPRRQGSAPELPPGFR) is disordered. One can recognise an NAC domain in the interval 35-204 (LPPGFRFHPT…DWVLCRIYKK (170 aa)). A DNA-binding region spans residues 137–210 (VGVKKALVFY…IYKKTSKAAA (74 aa)).

Its subcellular location is the nucleus. In terms of biological role, transcription factor of the NAC family associated with the grain protein content (GPC). Sequences of the 11 European varieties of H.vulgare tested belongs to the same haplotype while the sequence found in H.spontaneum, an ancestor of the cultivated H.vulgare which has a higher GPC, belongs to an other haplotype. The chain is NAC transcription factor NAM-B1 (NAM-B1) from Hordeum vulgare subsp. spontaneum (Wild barley).